An 829-amino-acid chain; its full sequence is MAPVSTVVKNAISDLAKISDGERLREALLSLKSYLGTGENSAQTQETTEFNRNHYTPVLEFLVAQIGPQWLDLLTSERLELWDSFFLEGPPDQAFLVLMDSLGKTGPSIRLDRCVHVLERFLQRGALAEVIWEVCQQQLESNPTSVLHEAILGRISSLPDHLANCLQQHNKPLFYPKNYYPRLAGSIIRVLQMVSDALRDGKNCSISFASQVVGKVCMQGRQKELLSVLVPRLKSLVQSDCIWQRICWRLLESVPDRWMEPVLTGIVQTAPGAEVLSQLLGDLVVKNKRTQFLLTKKMLFLQYGLKKDALQSILGYLSLDASRRHLLVKVLRELLEVWSSGSVVKHSPHPQLLHVSRCLLICLGLLNKQEIESCKQDLLVSLTSGARNYLDSSVPTTRRMGMVVAECLSHHIDTEGPGLSFQYEEDEDTRDLKALLKPPHMVETDSADFVKRPVESSPSKSPLSSPEVREKSKVKVKADQASDSDLDSDDDLVPYDMSADTELKKSKAPAYIRDCIEVLLSDDVEKLEVTMASLATLIQANTLATKEVSMELAKILLHIDEKPSVARFTELRHAALVAVTVTDPVTVSQYLTSEFYSLNYSLRQRMDILDVLSSAAQSLSEKPSHETSAESGSVNTDPHSIRSTAWTSSEVPVNWRKVVEERIASKTRRFAKGHSAATPVPAPNRYHAVAGHFFFPLIQNYDRQIVTFDLLGEDRLVLGRMVHTLGILMHLTLNAPIASQMGKALLEFVWVLRSHTDAFVRQGLLFCISTVLLSVPWEHLMTDMAEEVVETQCWLAEVAERDSDDDCRRLALNGLFLMEKLRSNIQGNP.

2 disordered regions span residues 446 to 493 (SADF…DDLV) and 620 to 641 (SEKP…PHSI). Low complexity predominate over residues 456–466 (SSPSKSPLSSP). The span at 467 to 480 (EVREKSKVKVKADQ) shows a compositional bias: basic and acidic residues. Acidic residues predominate over residues 482-493 (SDSDLDSDDDLV). A compositionally biased stretch (polar residues) spans 629–641 (AESGSVNTDPHSI).

This sequence belongs to the TEL2 family.

The protein resides in the cytoplasm. The protein localises to the membrane. It localises to the nucleus. It is found in the chromosome. Its subcellular location is the telomere. Its function is as follows. Regulator of the DNA damage response (DDR). Part of the TTT complex that is required to stabilize protein levels of the phosphatidylinositol 3-kinase-related protein kinase (PIKK) family proteins. Promotes assembly, stabilizes and maintains the activity of TORC complexes, which regulate cell growth and survival in response to nutrient and hormonal signals. May be involved in telomere length regulation. This chain is Telomere length regulation protein TEL2 homolog (telo2), found in Xenopus tropicalis (Western clawed frog).